A 65-amino-acid chain; its full sequence is Large ribosomal subunit protein bL35 (65 aa).

Residues 30 to 65 (AFRSHLAQNKSTKQKRQSKHGTFMHPTDYKRLKDLM) are disordered. Positions 56–65 (TDYKRLKDLM) are enriched in basic and acidic residues.

It belongs to the bacterial ribosomal protein bL35 family.

The polypeptide is Large ribosomal subunit protein bL35 (Mycoplasma mobile (strain ATCC 43663 / 163K / NCTC 11711) (Mesomycoplasma mobile)).